A 28-amino-acid polypeptide reads, in one-letter code: Conotoxin Cl1.2 (28 aa).

Post-translationally, contains 2 disulfide bonds. In terms of tissue distribution, expressed by the venom duct.

It is found in the secreted. In Californiconus californicus (California cone), this protein is Conotoxin Cl1.2.